We begin with the raw amino-acid sequence, 455 residues long: Nuclear distribution protein nudF (455 aa).

Residues 9–41 form the LisH domain; sequence QAEELHKSMIAYLVASDLPDTAAALRREVNLSE. Residues 61–88 are a coiled coil; it reads TSIARLQKKIMDLESRNATLQSELDNST. WD repeat units follow at residues 113–154, 156–196, 200–239, 242–281, 287–347, 349–388, 392–438, and 440–455; these read SHRD…RTLK, HTRA…KNIR, GHDH…CVKT, GHTD…NIEH, GHEN…LMTL, GHDS…KCVK, AHES…IQMR, and VVAT…IFAG. Positions 408–431 are disordered; that stretch reads KNVPGGDGAAEGEGNDKNGAGSEN.

The protein belongs to the WD repeat LIS1/nudF family. In terms of assembly, self-associates. Interacts with nudE and dynein.

It localises to the cytoplasm. The protein localises to the cytoskeleton. The protein resides in the spindle pole. Its function is as follows. Positively regulates the activity of the minus-end directed microtubule motor protein dynein. May enhance dynein-mediated microtubule sliding by targeting dynein to the microtubule plus end. Required for nuclear migration during vegetative growth as well as development. Required for retrograde early endosome (EE) transport from the hyphal tip. Required for localization of dynein to the mitotic spindle poles. Recruits additional proteins to the dynein complex at SPBs. The sequence is that of Nuclear distribution protein nudF from Aspergillus flavus (strain ATCC 200026 / FGSC A1120 / IAM 13836 / NRRL 3357 / JCM 12722 / SRRC 167).